A 295-amino-acid polypeptide reads, in one-letter code: Putative attaching and effacing protein homolog (295 aa).

The N-terminal stretch at 1–25 (MSHYKTGHKQPRFRYSVLARCVAWA) is a signal peptide.

This sequence belongs to the intimin/invasin family.

The chain is Putative attaching and effacing protein homolog (eaeH) from Escherichia coli (strain K12).